A 218-amino-acid chain; its full sequence is Pyridoxine/pyridoxamine 5'-phosphate oxidase (218 aa).

Substrate contacts are provided by residues 14 to 17 (RREY) and K72. FMN contacts are provided by residues 67-72 (RIVLLK), 82-83 (YT), R88, K89, and Q111. Substrate is bound by residues Y129, R133, and S137. FMN-binding positions include 146–147 (QS) and W191. 197-199 (RLH) is a substrate binding site. FMN is bound at residue R201.

This sequence belongs to the pyridoxamine 5'-phosphate oxidase family. As to quaternary structure, homodimer. FMN is required as a cofactor.

It carries out the reaction pyridoxamine 5'-phosphate + O2 + H2O = pyridoxal 5'-phosphate + H2O2 + NH4(+). The enzyme catalyses pyridoxine 5'-phosphate + O2 = pyridoxal 5'-phosphate + H2O2. The protein operates within cofactor metabolism; pyridoxal 5'-phosphate salvage; pyridoxal 5'-phosphate from pyridoxamine 5'-phosphate: step 1/1. It functions in the pathway cofactor metabolism; pyridoxal 5'-phosphate salvage; pyridoxal 5'-phosphate from pyridoxine 5'-phosphate: step 1/1. In terms of biological role, catalyzes the oxidation of either pyridoxine 5'-phosphate (PNP) or pyridoxamine 5'-phosphate (PMP) into pyridoxal 5'-phosphate (PLP). This is Pyridoxine/pyridoxamine 5'-phosphate oxidase from Escherichia coli O157:H7.